The sequence spans 465 residues: RuvB-like helicase 2 (465 aa).

73–80 (GEPSTGKT) is a binding site for ATP.

Belongs to the RuvB family. Forms homohexameric rings. May form a dodecamer with pont made of two stacked hexameric rings. Component of the chromatin remodeling Ino80 complex.

The protein localises to the nucleus. It carries out the reaction ATP + H2O = ADP + phosphate + H(+). Functionally, acts as a transcriptional coactivator in Wg signaling. In terms of biological role, proposed core component of the chromatin remodeling Ino80 complex which is involved in transcriptional regulation, DNA replication and probably DNA repair. The sequence is that of RuvB-like helicase 2 from Aedes aegypti (Yellowfever mosquito).